Here is a 978-residue protein sequence, read N- to C-terminus: Sensor histidine kinase TodS (978 aa).

Residues 32 to 103 (CEEHARIIFD…TQKRLVETAS (72 aa)) form the PAS 1 domain. The region spanning 108-162 (VRCDVEILGKSGGREVIAVDFSLLPICNEEGSIVYLLAEGRNITDKKKAEAMLAL) is the PAC 1 domain. The region spanning 187–405 (KVSHELRTPL…LFQVKLPLNA (219 aa)) is the Histidine kinase 1 domain. A Phosphohistidine; by autocatalysis modification is found at His190. The Response regulatory domain maps to 452 to 567 (RVLIVEDNPD…ELRARVSNLV (116 aa)). Residue Asp500 is modified to 4-aspartylphosphate. Residues 611-681 (SEARWKAVYE…QRLANLLQGG (71 aa)) form the PAS 2 domain. Residues 685–737 (YSVERSYLCKNGSTIWANASVSLMPQRVGESPVILQIIDDITEKKQAQENLNQ) enclose the PAC 2 domain. The 218-residue stretch at 757–974 (YIAHEINQPL…CFLVSIPARQ (218 aa)) folds into the Histidine kinase 2 domain. The residue at position 760 (His760) is a Phosphohistidine.

In terms of assembly, homodimer. Binds as a dimer to a pseudopalindromic sequence. In terms of processing, autophosphorylated. Activation requires a sequential transfer of a phosphate group from a His in the primary transmitter domain, to an Asp in the receiver domain and to a His in the secondary transmitter domain.

It is found in the cytoplasm. The catalysed reaction is ATP + protein L-histidine = ADP + protein N-phospho-L-histidine.. Its function is as follows. Member of the two-component regulatory system TodS/TodT involved in the regulation of toluene degradation. Phosphorylates TodT via a four-step phosphorelay in response to toluene. This chain is Sensor histidine kinase TodS (todS), found in Pseudomonas putida (strain ATCC 700007 / DSM 6899 / JCM 31910 / BCRC 17059 / LMG 24140 / F1).